Consider the following 247-residue polypeptide: Synaptogyrin homolog 1 (247 aa).

The MARVEL domain maps to 21–175 (FFKKPTVLFR…AAFFAWRRYE (155 aa)). 4 consecutive transmembrane segments (helical) span residues 25-45 (PTVL…YSVS), 69-89 (CSFA…LIVL), 105-125 (AVLA…IGFF), and 151-171 (FGIL…FFAW). The interval 206–247 (DSTGIGHVGAPPPQSSYQSGAAPQTMQQPPSNPYTQSEGYGY) is disordered. A compositionally biased stretch (polar residues) spans 220-247 (SSYQSGAAPQTMQQPPSNPYTQSEGYGY).

The protein belongs to the synaptogyrin family. As to expression, expressed in a wide variety of neurons and is expressed weakly in the non-neuronal distal tip cells. A punctate pattern was observed in the ventral and dorsal nerve cords and the nerve ring. Weak expression is seen in neuronal cell bodies and commissures.

The protein resides in the membrane. This chain is Synaptogyrin homolog 1 (sng-1), found in Caenorhabditis elegans.